Here is a 422-residue protein sequence, read N- to C-terminus: Dihydrofolate synthase/folylpolyglutamate synthase (422 aa).

29 to 31 (DLG) is a binding site for 7,8-dihydropteroate. 59–62 (GKGT) serves as a coordination point for ATP. Ser-83 is a binding site for Mg(2+). 122–125 (TYFE) contributes to the 7,8-dihydropteroate binding site. Glu-146 contributes to the Mg(2+) binding site. 153–155 (LDA) is a binding site for 7,8-dihydropteroate. His-173 is a Mg(2+) binding site. Lys-188 carries the N6-carboxylysine modification. The ATP site is built by Asn-257, Arg-289, and Asp-302.

This sequence belongs to the folylpolyglutamate synthase family. In terms of assembly, monomer. Mg(2+) is required as a cofactor.

It catalyses the reaction 7,8-dihydropteroate + L-glutamate + ATP = 7,8-dihydrofolate + ADP + phosphate + H(+). The catalysed reaction is (6S)-5,6,7,8-tetrahydrofolyl-(gamma-L-Glu)(n) + L-glutamate + ATP = (6S)-5,6,7,8-tetrahydrofolyl-(gamma-L-Glu)(n+1) + ADP + phosphate + H(+). The enzyme catalyses 10-formyltetrahydrofolyl-(gamma-L-Glu)(n) + L-glutamate + ATP = 10-formyltetrahydrofolyl-(gamma-L-Glu)(n+1) + ADP + phosphate + H(+). It carries out the reaction (6R)-5,10-methylenetetrahydrofolyl-(gamma-L-Glu)(n) + L-glutamate + ATP = (6R)-5,10-methylenetetrahydrofolyl-(gamma-L-Glu)(n+1) + ADP + phosphate + H(+). The protein operates within cofactor biosynthesis; tetrahydrofolate biosynthesis; 7,8-dihydrofolate from 2-amino-4-hydroxy-6-hydroxymethyl-7,8-dihydropteridine diphosphate and 4-aminobenzoate: step 2/2. Its pathway is cofactor biosynthesis; tetrahydrofolylpolyglutamate biosynthesis. Its function is as follows. Functions in two distinct reactions of the de novo folate biosynthetic pathway. Catalyzes the addition of a glutamate residue to dihydropteroate (7,8-dihydropteroate or H2Pte) to form dihydrofolate (7,8-dihydrofolate monoglutamate or H2Pte-Glu). Also catalyzes successive additions of L-glutamate to tetrahydrofolate or 10-formyltetrahydrofolate or 5,10-methylenetetrahydrofolate, leading to folylpolyglutamate derivatives. The protein is Dihydrofolate synthase/folylpolyglutamate synthase of Escherichia coli (strain K12).